A 90-amino-acid polypeptide reads, in one-letter code: U7-theraphotoxin-Hhn1a 7 (90 aa).

Positions 1 to 19 (MKTAIFTVVLALAVFAVLS) are cleaved as a signal peptide. Positions 20–50 (FGWEANEKALSEGFTELIHEKEAASETEARE) are excised as a propeptide. 3 disulfide bridges follow: C51–C65, C58–C70, and C64–C81.

This sequence belongs to the neurotoxin 10 (Hwtx-1) family. 13 (Hntx-13) subfamily. In terms of tissue distribution, expressed by the venom gland.

Its subcellular location is the secreted. In terms of biological role, ion channel inhibitor. In Cyriopagopus hainanus (Chinese bird spider), this protein is U7-theraphotoxin-Hhn1a 7.